Reading from the N-terminus, the 333-residue chain is Na(+)/H(+) exchange regulatory cofactor NHE-RF1 (333 aa).

Residues Leu-13–Gln-93 form the PDZ 1 domain. Disordered regions lie at residues Val-90 to Asp-164 and Leu-232 to Leu-333. Residues Gln-97–Arg-111 show a composition bias toward basic and acidic residues. Residues Glu-112–Glu-122 are compositionally biased toward low complexity. The span at Ser-124–Pro-133 shows a compositional bias: basic and acidic residues. The PDZ 2 domain occupies Leu-135–Leu-215. Composition is skewed to basic and acidic residues over residues Ser-274–Ser-289 and Trp-323–Leu-333.

It localises to the endomembrane system. Its subcellular location is the cell projection. The protein localises to the filopodium. It is found in the ruffle. The protein resides in the microvillus. Its function is as follows. Scaffold protein that connects plasma membrane proteins with members of the ezrin/moesin/radixin family and thereby helps to link them to the actin cytoskeleton and to regulate their surface expression. Was first known to play a role in the regulation of the activity and subcellular location of SLC9A3. May enhance Wnt signaling. The chain is Na(+)/H(+) exchange regulatory cofactor NHE-RF1 (NHERF1) from Gallus gallus (Chicken).